The sequence spans 746 residues: Bud site selection protein 7 (746 aa).

The interval 733-746 is CHS5-binding; that stretch reads LNFFTTCTIGCYDA.

Belongs to the CHAPS family. As to quaternary structure, component of the CHS5/6 complex composed of the 4 CHAPS proteins BCH1, BCH2v, BUD7, and CHS6 as well as at least CHS5 and GTP-bound ARF1. The complex interacts with the cargo protein CHS3.

It is found in the golgi apparatus. The protein resides in the trans-Golgi network membrane. In terms of biological role, member of the CHS5-ARF1P-binding proteins (CHAPS) which mediates export of specific cargo proteins, including chitin synthase CHS3. May be involved in positioning the proximal bud pole signal. The chain is Bud site selection protein 7 (BUD7) from Saccharomyces cerevisiae (strain ATCC 204508 / S288c) (Baker's yeast).